The following is a 595-amino-acid chain: Phenylalanine--tRNA ligase beta subunit (595 aa).

The tract at residues 86–90 is 3'-CCA residue in tRNA; sequence KLSKP. One can recognise a B5 domain in the interval 292-370; it reads FNDRIMDVSI…VGYGFNNLPK (79 aa). Mg(2+) contacts are provided by D348, D354, E357, and D358.

It belongs to the phenylalanyl-tRNA synthetase beta subunit family. Type 2 subfamily. In terms of assembly, tetramer of two alpha and two beta subunits. Mg(2+) is required as a cofactor.

The protein localises to the cytoplasm. The catalysed reaction is tRNA(Phe) + L-phenylalanine + ATP = L-phenylalanyl-tRNA(Phe) + AMP + diphosphate + H(+). In Saccharomyces cerevisiae (strain ATCC 204508 / S288c) (Baker's yeast), this protein is Phenylalanine--tRNA ligase beta subunit (FRS1).